Here is a 1207-residue protein sequence, read N- to C-terminus: DNA-directed RNA polymerase subunit beta' (1207 aa).

Residues Cys60, Cys62, Cys75, and Cys78 each contribute to the Zn(2+) site. Mg(2+)-binding residues include Asp450, Asp452, and Asp454. Residues Cys819, Cys893, Cys900, and Cys903 each contribute to the Zn(2+) site.

It belongs to the RNA polymerase beta' chain family. In terms of assembly, the RNAP catalytic core consists of 2 alpha, 1 beta, 1 beta' and 1 omega subunit. When a sigma factor is associated with the core the holoenzyme is formed, which can initiate transcription. Requires Mg(2+) as cofactor. It depends on Zn(2+) as a cofactor.

It catalyses the reaction RNA(n) + a ribonucleoside 5'-triphosphate = RNA(n+1) + diphosphate. DNA-dependent RNA polymerase catalyzes the transcription of DNA into RNA using the four ribonucleoside triphosphates as substrates. The protein is DNA-directed RNA polymerase subunit beta' of Streptococcus pyogenes serotype M3 (strain SSI-1).